Here is a 440-residue protein sequence, read N- to C-terminus: Xaa-Pro dipeptidase (440 aa).

5 residues coordinate Mn(2+): Asp-244, Asp-255, His-336, Glu-381, and Glu-420.

Belongs to the peptidase M24B family. It depends on Mn(2+) as a cofactor. Post-translationally, the N-terminus is blocked.

The catalysed reaction is Xaa-L-Pro dipeptide + H2O = an L-alpha-amino acid + L-proline. It carries out the reaction diisopropyl fluorophosphate + H2O = diisopropyl phosphate + fluoride + 2 H(+). Its function is as follows. Splits dipeptides with a prolyl or hydroxyprolyl residue in the C-terminal position and a nonpolar amino acid at the N-terminal position. Also catalyzes the hydrolysis of toxic organophosphorus cholinesterase-inhibiting compounds including nerve gases such as diisopropylfluorophosphate (DFP), O-isopropyl methylphosphonofluoridate (sarin), O-pinacolyl methylphosphonofluoridate (soman), and O-cyclohexyl methylphosphonofluoridate. In Pseudoalteromonas haloplanktis (Alteromonas haloplanktis), this protein is Xaa-Pro dipeptidase (pepQ).